The primary structure comprises 859 residues: Protein argonaute-2 (859 aa).

Positions 1-27 are disordered; the sequence is MYSGAGPALAPPAPPPPIQGYAFKPPP. Tyr2 is subject to 3'-nitrotyrosine. The span at 9 to 27 shows a compositional bias: pro residues; that stretch reads LAPPAPPPPIQGYAFKPPP. In terms of domain architecture, PAZ spans 229 to 348; it reads PVIEFVCEVL…LPLEVCNIVA (120 aa). An interaction with guide RNA region spans residues 311–316; that stretch reads YFKDRH. Ser387 carries the phosphoserine modification. The 302-residue stretch at 517-818 folds into the Piwi domain; that stretch reads LVVVILPGKT…VAFRARYHLV (302 aa). Positions 524–566 are interaction with guide RNA; the sequence is GKTPVYAEVKRVGDTVLGMATQCVQMKNVQRTTPQTLSNLCLK. The tract at residues 587–590 is interaction with GW182 family members; that stretch reads FQQP. Position 597 (Asp597) interacts with a divalent metal cation. Residues 650 to 660 form an interaction with GW182 family members region; that stretch reads LIQFYKSTRFK. Asp669 provides a ligand contact to a divalent metal cation. Pro700 bears the 4-hydroxyproline mark. Interaction with guide RNA regions lie at residues 709–710, 753–761, and 790–812; these read KR, HAGIQGTSR, and YVRC…VAFR. His807 provides a ligand contact to a divalent metal cation. Phosphoserine is present on residues Ser824, Ser828, Ser831, and Ser834.

Belongs to the argonaute family. Ago subfamily. As to quaternary structure, interacts with DICER1 through its Piwi domain and with TARBP2 during assembly of the RNA-induced silencing complex (RISC). Together, DICER1, AGO2 and TARBP2 constitute the trimeric RISC loading complex (RLC), or micro-RNA (miRNA) loading complex (miRLC). Within the RLC/miRLC, DICER1 and TARBP2 are required to process precursor miRNAs (pre-miRNAs) to mature miRNAs and then load them onto AGO2. AGO2 bound to the mature miRNA constitutes the minimal RISC and may subsequently dissociate from DICER1 and TARBP2. Note however that the term RISC has also been used to describe the trimeric RLC/miRLC. The formation of RISC complexes containing siRNAs rather than miRNAs appears to occur independently of DICER1. Interacts with AGO1. Also interacts with DDB1, DDX5, DDX6, DDX20, DHX30, DHX36, DDX47, DHX9, ELAVL, FXR1, GEMIN4, HNRNPF, IGF2BP1, ILF3, IMP8, MATR3, PABPC1, PRMT5, P4HA1, P4HB, RBM4, SART3, TNRC6A, TNRC6B, UPF1 and YBX1. Interacts with the P-body components DCP1A and XRN1. Associates with polysomes and messenger ribonucleoproteins (mNRPs). Interacts with RBM4; the interaction is modulated under stress-induced conditions, occurs under both cell proliferation and differentiation conditions and in an RNA- and phosphorylation-independent manner. Interacts with LIMD1, WTIP and AJUBA. Interacts with TRIM71; the interaction increases in presence of RNA. Interacts with APOBEC3G in an RNA-dependent manner. Interacts with APOBEC3A, APOBEC3C, APOBEC3F and APOBEC3H. Interacts with DICER1, TARBP2, EIF6, MOV10 and RPL7A (60S ribosome subunit); they form a large RNA-induced silencing complex (RISC). Interacts with FMR1. Interacts with ZFP36. Found in a complex, composed of AGO2, CHD7 and ARB2A. Interacts with RC3H1; the interaction is RNA independent. Interacts with SND1. Interacts with SYT11. Interacts with CLNK. Interacts with GARRE1. Interacts with GRB2; this interaction is important for the formation of a ternary complex containing GRB2, AGO2 and DICER1. (Microbial infection) Interacts with Epstein-Barr virus (EBV) tegument protein BGLF2; this interaction participates in the regulation of cellular miRNA by the virus, leading to enhanced SUMOylation. In terms of assembly, (Microbial infection) Interacts with rotavirus A non-structural protein 5; this interaction probably plays a role in the sequestration of AGO2 in viral factories. As to quaternary structure, (Microbial infection) Interacts with human herpesvirus 8 protein MTA/ORF57; this interaction inhibits P-body formation. Mg(2+) is required as a cofactor. Requires Mn(2+) as cofactor. In terms of processing, hydroxylated. 4-hydroxylation appears to enhance protein stability but is not required for miRNA-binding or endonuclease activity. Post-translationally, ubiquitinated on surface-exposed lysines by a SCF-like E3 ubiquitin-protein ligase complex containing ZSWIM8 during target-directed microRNA degradation (TDMD), a process that mediates degradation of microRNAs (miRNAs). Ubiquitination by the SCF-like E3 ubiquitin-protein ligase complex containing ZSWIM8 leads to its subsequent degradation, thereby exposing miRNAs for degradation. ZSWIM8 recognizes and binds AGO2 when it is engaged with a TDMD target. Phosphorylated. A phosphorylation cycle of C-terminal serine cluster (Ser-824-Ser-834) regulates the release of target mRNAs. Target-binding leads to phosphorylation of these residues by CSNK1A1, which reduces the affinity of AGO2 for mRNA and enables target release. The ANKRD52-PPP6C phosphatase complex dephosphorylates the residues, which primes AGO2 for binding a new target. In terms of processing, phosphorylation at Ser-387 by AKT3; leads to up-regulate translational repression of microRNA target and down-regulate endonucleolytic cleavage.

The protein resides in the cytoplasm. The protein localises to the P-body. Its subcellular location is the nucleus. It catalyses the reaction Endonucleolytic cleavage to 5'-phosphomonoester.. Its activity is regulated as follows. Inhibited by EDTA. Required for RNA-mediated gene silencing (RNAi) by the RNA-induced silencing complex (RISC). The 'minimal RISC' appears to include AGO2 bound to a short guide RNA such as a microRNA (miRNA) or short interfering RNA (siRNA). These guide RNAs direct RISC to complementary mRNAs that are targets for RISC-mediated gene silencing. The precise mechanism of gene silencing depends on the degree of complementarity between the miRNA or siRNA and its target. Binding of RISC to a perfectly complementary mRNA generally results in silencing due to endonucleolytic cleavage of the mRNA specifically by AGO2. Binding of RISC to a partially complementary mRNA results in silencing through inhibition of translation, and this is independent of endonuclease activity. May inhibit translation initiation by binding to the 7-methylguanosine cap, thereby preventing the recruitment of the translation initiation factor eIF4-E. May also inhibit translation initiation via interaction with EIF6, which itself binds to the 60S ribosomal subunit and prevents its association with the 40S ribosomal subunit. The inhibition of translational initiation leads to the accumulation of the affected mRNA in cytoplasmic processing bodies (P-bodies), where mRNA degradation may subsequently occur. In some cases RISC-mediated translational repression is also observed for miRNAs that perfectly match the 3' untranslated region (3'-UTR). Can also up-regulate the translation of specific mRNAs under certain growth conditions. Binds to the AU element of the 3'-UTR of the TNF (TNF-alpha) mRNA and up-regulates translation under conditions of serum starvation. Also required for transcriptional gene silencing (TGS), in which short RNAs known as antigene RNAs or agRNAs direct the transcriptional repression of complementary promoter regions. In terms of biological role, (Microbial infection) Upon Sars-CoV-2 infection, associates with viral miRNA-like small RNA, CoV2-miR-O7a, and may repress mRNAs, such as BATF2, to evade the IFN response. The sequence is that of Protein argonaute-2 from Homo sapiens (Human).